A 470-amino-acid polypeptide reads, in one-letter code: MAAALKPSAPEIRKAAQEFINYLNKAVTPFHATQEVKDRLLQAGFTELPESGHWDIQPTSKYFVTKNRSAILAFAVGGSYKPGSGFSIVVGHTDSPCLRVKPISHQKSDKFLQVGVSTYGGGIWRTWFDRDLSVAGLVIVKNGEKLQHKLIDVKKPVLFIPNLAIHLETDRTTFKPNTETELRPILETFAAAGINAPQKPESTGFADPRNITNNHHPQFLGLIAKEAGCQPEDIVDLDLYLYDTNKAAIVGMEDEFISGARLDNQVGTYTAISGLLESLTGESFKNDPQIRIAACFDNEEVGSDSAMGASSSFTEFVLRRLSAGGSTTAFEEAIGKSMLISADQAHATHPNYSAKHEENHRPAFHGGVVVKVNVNQRYATTSTTHAALKQVAFEAQVPLQVVVVRNDSPCGSTVGPILATKLGLQTVDVGCPQLAMHSIREFADTSSIYQATTLYSTFYERLSTVLSNMQ.

A Zn(2+)-binding site is contributed by H92. Residue H166 coordinates substrate. D263 contributes to the Zn(2+) binding site. E299 contacts substrate. Zn(2+) contacts are provided by E300 and D343. Positions 343, 346, 371, and 378 each coordinate substrate. H437 contributes to the Zn(2+) binding site.

It belongs to the peptidase M18 family. In terms of assembly, tetrahedron-shaped homododecamer built from six homodimers. Requires Zn(2+) as cofactor. As to expression, expressed in various cell types and tissues including the pharynx, neurons, body wall muscle, intestine and vulva.

It is found in the cytoplasm. The protein localises to the cytosol. The enzyme catalyses Release of an N-terminal aspartate or glutamate from a peptide, with a preference for aspartate.. In terms of biological role, aminopeptidase with specificity towards an acidic amino acid at the N-terminus. Plays a role in membrane trafficking and is specifically involved in the recycling and degradation of endocytic cargo. The polypeptide is Aspartyl aminopeptidase (Caenorhabditis elegans).